The sequence spans 230 residues: Probable septum site-determining protein MinC (230 aa).

This sequence belongs to the MinC family. As to quaternary structure, interacts with MinD and FtsZ.

Functionally, cell division inhibitor that blocks the formation of polar Z ring septums. Rapidly oscillates between the poles of the cell to destabilize FtsZ filaments that have formed before they mature into polar Z rings. Prevents FtsZ polymerization. This chain is Probable septum site-determining protein MinC, found in Erwinia tasmaniensis (strain DSM 17950 / CFBP 7177 / CIP 109463 / NCPPB 4357 / Et1/99).